A 196-amino-acid polypeptide reads, in one-letter code: Peptidoglycan recognition protein (196 aa).

An N-terminal signal peptide occupies residues 1–23 (MARLHSAVVLALALSSLLTEIAA). 2 cysteine pairs are disulfide-bonded: Cys25–Cys147 and Cys61–Cys67. Positions 46 to 173 (RPVSLVIVQH…RQLIASESPG (128 aa)) constitute an N-acetylmuramoyl-L-alanine amidase domain.

The protein belongs to the N-acetylmuramoyl-L-alanine amidase 2 family. Monomer. In terms of tissue distribution, constitutively expressed in fat body, epithelial cells and hemocytes. Not detected in Malpighian tubules, silk gland or midgut.

Its function is as follows. Binds specifically to peptidoglycan and triggers the propenoloxidase cascade which is an important insect defense mechanism. The sequence is that of Peptidoglycan recognition protein from Bombyx mori (Silk moth).